A 348-amino-acid chain; its full sequence is 3-isopropylmalate dehydrogenase (348 aa).

76 to 87 (GPKWTDPNNRPE) provides a ligand contact to NAD(+). 4 residues coordinate substrate: arginine 94, arginine 104, arginine 132, and aspartate 217. Aspartate 217, aspartate 241, and aspartate 245 together coordinate Mg(2+). Position 275–287 (275–287 (GSAPDIAGKNVAN)) interacts with NAD(+).

This sequence belongs to the isocitrate and isopropylmalate dehydrogenases family. LeuB type 1 subfamily. In terms of assembly, homodimer. The cofactor is Mg(2+). It depends on Mn(2+) as a cofactor.

It is found in the cytoplasm. The catalysed reaction is (2R,3S)-3-isopropylmalate + NAD(+) = 4-methyl-2-oxopentanoate + CO2 + NADH. Its pathway is amino-acid biosynthesis; L-leucine biosynthesis; L-leucine from 3-methyl-2-oxobutanoate: step 3/4. Functionally, catalyzes the oxidation of 3-carboxy-2-hydroxy-4-methylpentanoate (3-isopropylmalate) to 3-carboxy-4-methyl-2-oxopentanoate. The product decarboxylates to 4-methyl-2 oxopentanoate. The chain is 3-isopropylmalate dehydrogenase from Staphylococcus aureus (strain MW2).